The chain runs to 984 residues: Zinc finger and BTB domain-containing protein 4 (984 aa).

In terms of domain architecture, BTB spans 30 to 131 (CDVTLIAGDT…IYSARLALPG (102 aa)). A Glycyl lysine isopeptide (Lys-Gly) (interchain with G-Cter in SUMO2) cross-link involves residue Lys40. 3 disordered regions span residues 71–104 (TGGS…PPRV), 172–210 (MVTS…RRPF), and 227–262 (THEA…ASAL). A compositionally biased stretch (low complexity) spans 74-88 (SAPSPATTTAASSSS). The interaction with CBFA2T3 stretch occupies residues 165–324 (VPPAPSSMVT…CRYCEKVFAL (160 aa)). The C2H2-type 1; atypical zinc finger occupies 210 to 232 (FPCPRCGKSFIHPKRLQTHEAQC). The span at 242–255 (AGLGPGGSGPGGPA) shows a compositional bias: gly residues. 3 C2H2-type zinc fingers span residues 285-307 (YVCA…SNVH), 313-335 (YPCR…EVWH), and 341-364 (YQCI…RAFH). Ser367 bears the Phosphoserine mark. Residues 461–575 (GSSSSGAAGG…GSSQLQAPPP (115 aa)) are disordered. The span at 467 to 477 (AAGGGPVGTGG) shows a compositional bias: gly residues. 2 stretches are compositionally biased toward low complexity: residues 478–488 (SQAASVITYTT) and 507–529 (ATPT…ATAT). Lys548 is covalently cross-linked (Glycyl lysine isopeptide (Lys-Gly) (interchain with G-Cter in SUMO2)). A compositionally biased stretch (gly residues) spans 552-565 (GVSGSGGSPTGTGR). A Glycyl lysine isopeptide (Lys-Gly) (interchain with G-Cter in SUMO2) cross-link involves residue Lys590. Disordered regions lie at residues 593–696 (ISET…GERR), 713–734 (RKHQ…RSST), 756–836 (QRHA…VAGG), 853–876 (GGSR…ASEG), and 947–984 (QTAP…GDVG). The span at 604–627 (SGEEVEESEEEEEEEEEEDQEDQE) shows a compositional bias: acidic residues. Residues 628–637 (ESKAGGEDQL) show a composition bias toward basic and acidic residues. 2 consecutive C2H2-type zinc fingers follow at residues 697–719 (HRCG…QEAH) and 736–758 (FTCP…GQRH). Residues Thr766 and Thr768 each carry the phosphothreonine; by HIPK2 modification. Positions 807–819 (AAAAAAEASESAS) are enriched in low complexity. The segment covering 948 to 966 (TAPPTPPTPPPPLPLPVPP) has biased composition (pro residues). Residue Thr955 is modified to Phosphothreonine; by HIPK2.

As to quaternary structure, interacts with HIPK2. Interacts with CBFA2T3. Interacts with ZBTB38. Phosphorylated by HIPK2. This phosphorylation reduces stability and triggers ZBTB4 protein degradation in response to DNA damage.

The protein resides in the nucleus. The protein localises to the chromosome. Functionally, transcriptional repressor with bimodal DNA-binding specificity. Represses transcription in a methyl-CpG-dependent manner. Binds with a higher affinity to methylated CpG dinucleotides in the consensus sequence 5'-CGCG-3' but can also bind to the non-methylated consensus sequence 5'-CTGCNA-3' also known as the consensus kaiso binding site (KBS). Can also bind specifically to a single methyl-CpG pair and can bind hemimethylated DNA but with a lower affinity compared to methylated DNA. Plays a role in postnatal myogenesis, may be involved in the regulation of satellite cells self-renewal. The sequence is that of Zinc finger and BTB domain-containing protein 4 (Zbtb4) from Rattus norvegicus (Rat).